We begin with the raw amino-acid sequence, 214 residues long: MTDLSTLRLSYTHGELRRADLNADPAQQFQSWLDAALRSGLREPYAMSLATADREGRPSVRTVLLRGIQDGGLTFFTNYESHKGHDLTDNPQAEVLFFWAEHERQVRAYGPVERLSSEDSAAYFHSRPRESQLAAHASDPQSAPVSNRAELETRLTALHERFAADQEVPCPEFWGGYRIQVQEWEFWQGRPNRMHDRFRYRRNDAGWHIDRLMP.

Substrate contacts are provided by residues 8–11 and Arg-66; that span reads RLSY. FMN contacts are provided by residues 61-66, 76-77, Lys-83, and Gln-105; these read RTVLLR and FT. Substrate-binding residues include Tyr-123, Arg-127, and Ser-131. The disordered stretch occupies residues 126-146; sequence SRPRESQLAAHASDPQSAPVS. Residues 141 to 142 and Trp-187 each bind FMN; that span reads QS. 193 to 195 provides a ligand contact to substrate; sequence RMH. Arg-197 lines the FMN pocket.

This sequence belongs to the pyridoxamine 5'-phosphate oxidase family. In terms of assembly, homodimer. The cofactor is FMN.

The catalysed reaction is pyridoxamine 5'-phosphate + O2 + H2O = pyridoxal 5'-phosphate + H2O2 + NH4(+). The enzyme catalyses pyridoxine 5'-phosphate + O2 = pyridoxal 5'-phosphate + H2O2. It functions in the pathway cofactor metabolism; pyridoxal 5'-phosphate salvage; pyridoxal 5'-phosphate from pyridoxamine 5'-phosphate: step 1/1. Its pathway is cofactor metabolism; pyridoxal 5'-phosphate salvage; pyridoxal 5'-phosphate from pyridoxine 5'-phosphate: step 1/1. In terms of biological role, catalyzes the oxidation of either pyridoxine 5'-phosphate (PNP) or pyridoxamine 5'-phosphate (PMP) into pyridoxal 5'-phosphate (PLP). This chain is Pyridoxine/pyridoxamine 5'-phosphate oxidase, found in Deinococcus deserti (strain DSM 17065 / CIP 109153 / LMG 22923 / VCD115).